The primary structure comprises 187 residues: Elongation factor P (187 aa).

Belongs to the elongation factor P family.

Its subcellular location is the cytoplasm. It functions in the pathway protein biosynthesis; polypeptide chain elongation. Functionally, involved in peptide bond synthesis. Stimulates efficient translation and peptide-bond synthesis on native or reconstituted 70S ribosomes in vitro. Probably functions indirectly by altering the affinity of the ribosome for aminoacyl-tRNA, thus increasing their reactivity as acceptors for peptidyl transferase. This is Elongation factor P from Clavibacter michiganensis subsp. michiganensis (strain NCPPB 382).